The chain runs to 278 residues: Orotidine 5'-phosphate decarboxylase (278 aa).

Lys-96 acts as the Proton donor in catalysis.

The protein belongs to the OMP decarboxylase family. Type 2 subfamily.

It catalyses the reaction orotidine 5'-phosphate + H(+) = UMP + CO2. It participates in pyrimidine metabolism; UMP biosynthesis via de novo pathway; UMP from orotate: step 2/2. This chain is Orotidine 5'-phosphate decarboxylase, found in Salinispora tropica (strain ATCC BAA-916 / DSM 44818 / JCM 13857 / NBRC 105044 / CNB-440).